Consider the following 207-residue polypeptide: Ribosomal RNA large subunit methyltransferase E (207 aa).

Gly49, Trp51, Asp69, Asp87, and Asp111 together coordinate S-adenosyl-L-methionine. The Proton acceptor role is filled by Lys151.

Belongs to the class I-like SAM-binding methyltransferase superfamily. RNA methyltransferase RlmE family.

The protein resides in the cytoplasm. It carries out the reaction uridine(2552) in 23S rRNA + S-adenosyl-L-methionine = 2'-O-methyluridine(2552) in 23S rRNA + S-adenosyl-L-homocysteine + H(+). Specifically methylates the uridine in position 2552 of 23S rRNA at the 2'-O position of the ribose in the fully assembled 50S ribosomal subunit. This Oleidesulfovibrio alaskensis (strain ATCC BAA-1058 / DSM 17464 / G20) (Desulfovibrio alaskensis) protein is Ribosomal RNA large subunit methyltransferase E.